We begin with the raw amino-acid sequence, 310 residues long: Zinc-finger homeodomain protein 3 (310 aa).

The interval 1–64 (MEIASQEDPI…GLGKNHDHSH (64 aa)) is disordered. Over residues 39-56 (LNITTSNPLLVSSNSNGL) the composition is skewed to polar residues. Residues 87 to 136 (YKECLKNHAATMGGNAIDGCGEFMPSGEEGSIEALTCSVCNCHRNFHRRE) form a ZF-HD dimerization-type; degenerate zinc finger. Disordered regions lie at residues 184–220 (TAGSNSESEDLMEEEGGGSLTFRQPPPPPSPYSYGHN) and 281–310 (LSKKSNNVSNNVDLSAGNNDITENLASTNP). Acidic residues predominate over residues 190–199 (ESEDLMEEEG). The segment at residues 222–285 (KKRFRTKFTQ…NNKQNLSKKS (64 aa)) is a DNA-binding region (homeobox). Over residues 281 to 291 (LSKKSNNVSNN) the composition is skewed to low complexity. The segment covering 292–310 (VDLSAGNNDITENLASTNP) has biased composition (polar residues).

Homo- and heterodimer with other ZFHD proteins. Interacts with MIF2 and MIF3; these interactions prevent nuclear localization and DNA-binding to inhibit transcription regulation activity. Binds to ZHD1, ZHD2 and ZHD11. Interacts with HIPP30. Interacts with KIN10, KIN11 and FLZ8. In terms of tissue distribution, mostly expressed in flowers and inflorescence.

It is found in the nucleus. Functionally, putative transcription factor. The sequence is that of Zinc-finger homeodomain protein 3 (ZHD3) from Arabidopsis thaliana (Mouse-ear cress).